A 139-amino-acid polypeptide reads, in one-letter code: Large ribosomal subunit protein uL16 (139 aa).

This sequence belongs to the universal ribosomal protein uL16 family. Part of the 50S ribosomal subunit.

Its function is as follows. Binds 23S rRNA and is also seen to make contacts with the A and possibly P site tRNAs. In Protochlamydia amoebophila (strain UWE25), this protein is Large ribosomal subunit protein uL16.